A 133-amino-acid polypeptide reads, in one-letter code: NAD(P)H-quinone oxidoreductase subunit 3 (133 aa).

Helical transmembrane passes span 22-44 (YLLG…SRLL), 77-97 (MFAL…PWAV), and 102-122 (LGLL…VGLA).

This sequence belongs to the complex I subunit 3 family. NDH-1 can be composed of about 15 different subunits; different subcomplexes with different compositions have been identified which probably have different functions.

It is found in the cellular thylakoid membrane. The enzyme catalyses a plastoquinone + NADH + (n+1) H(+)(in) = a plastoquinol + NAD(+) + n H(+)(out). The catalysed reaction is a plastoquinone + NADPH + (n+1) H(+)(in) = a plastoquinol + NADP(+) + n H(+)(out). In terms of biological role, NDH-1 shuttles electrons from an unknown electron donor, via FMN and iron-sulfur (Fe-S) centers, to quinones in the respiratory and/or the photosynthetic chain. The immediate electron acceptor for the enzyme in this species is believed to be plastoquinone. Couples the redox reaction to proton translocation, and thus conserves the redox energy in a proton gradient. Cyanobacterial NDH-1 also plays a role in inorganic carbon-concentration. The protein is NAD(P)H-quinone oxidoreductase subunit 3 of Synechococcus sp. (strain ATCC 27144 / PCC 6301 / SAUG 1402/1) (Anacystis nidulans).